The primary structure comprises 780 residues: Aconitate hydratase, mitochondrial (780 aa).

Residues 1–27 (MAPYSLLVTRLQKALGVRQYHVASVLC) constitute a mitochondrion transit peptide. K31 is modified (N6-succinyllysine). K50 carries the N6-acetyllysine; alternate modification. At K50 the chain carries N6-succinyllysine; alternate. Q99 contributes to the substrate binding site. 2 positions are modified to N6-acetyllysine; alternate: K138 and K144. N6-succinyllysine; alternate occurs at positions 138 and 144. 192–194 (DSH) contributes to the substrate binding site. The residue at position 233 (K233) is an N6-acetyllysine; alternate. Residue K233 is modified to N6-succinyllysine; alternate. [4Fe-4S] cluster is bound at residue C385. K411 bears the N6-succinyllysine mark. Residues C448 and C451 each contribute to the [4Fe-4S] cluster site. The substrate site is built by R474 and R479. A compositionally biased stretch (basic and acidic residues) spans 528–537 (DADELPKGEF). The interval 528 to 560 (DADELPKGEFDPGQDTYQHPPKDSSGQHVDVSP) is disordered. Residue K549 is modified to N6-succinyllysine. Residues 551–560 (SSGQHVDVSP) are compositionally biased toward polar residues. Phosphoserine is present on S559. Position 573 is an N6-acetyllysine; alternate (K573). K573 carries the N6-succinyllysine; alternate modification. 2 positions are modified to N6-succinyllysine: K577 and K591. Residue K605 is modified to N6-acetyllysine; alternate. Residue K605 is modified to N6-succinyllysine; alternate. R607 is a binding site for substrate. Position 628 is an N6-succinyllysine (K628). At S670 the chain carries Phosphoserine. Substrate is bound at residue 670 to 671 (SR). K689 bears the N6-succinyllysine mark. An N6-acetyllysine; alternate mark is found at K723 and K730. Residues K723 and K730 each carry the N6-succinyllysine; alternate modification. 3 positions are modified to N6-acetyllysine: K736, K739, and K743.

Belongs to the aconitase/IPM isomerase family. In terms of assembly, monomer. Requires [4Fe-4S] cluster as cofactor. In terms of processing, forms covalent cross-links mediated by transglutaminase TGM2, between a glutamine and the epsilon-amino group of a lysine residue, forming homopolymers and heteropolymers.

The protein resides in the mitochondrion. It carries out the reaction citrate = D-threo-isocitrate. Its pathway is carbohydrate metabolism; tricarboxylic acid cycle; isocitrate from oxaloacetate: step 2/2. Its function is as follows. Catalyzes the isomerization of citrate to isocitrate via cis-aconitate. The sequence is that of Aconitate hydratase, mitochondrial (ACO2) from Homo sapiens (Human).